We begin with the raw amino-acid sequence, 105 residues long: MHIKKGDNVKVIAGKDKGKEGKVVSTEPKKDRVVVEGVNIIKKHQKPTQFNPEGGILETEAAIHVSNVQLLDPKTNEPTRVGHKFVDGKKVRIAKKSGEEIKSNN.

The tract at residues 1-25 (MHIKKGDNVKVIAGKDKGKEGKVVS) is disordered.

The protein belongs to the universal ribosomal protein uL24 family. Part of the 50S ribosomal subunit.

In terms of biological role, one of two assembly initiator proteins, it binds directly to the 5'-end of the 23S rRNA, where it nucleates assembly of the 50S subunit. Functionally, one of the proteins that surrounds the polypeptide exit tunnel on the outside of the subunit. This is Large ribosomal subunit protein uL24 from Staphylococcus saprophyticus subsp. saprophyticus (strain ATCC 15305 / DSM 20229 / NCIMB 8711 / NCTC 7292 / S-41).